The following is a 390-amino-acid chain: Elongation factor Ts 2, mitochondrial (390 aa).

A mitochondrion-targeting transit peptide spans 1–24 (MMIFSTAVLRLCATSRIGAVTKRA). The span at 30 to 40 (SSASSSSSSSS) shows a compositional bias: low complexity. The tract at residues 30-54 (SSASSSSSSSSPTQSMPPQRYTHHQ) is disordered.

Belongs to the EF-Ts family.

The protein resides in the mitochondrion. Associates with the EF-Tu.GDP complex and induces the exchange of GDP to GTP. It remains bound to the aminoacyl-tRNA.EF-Tu.GTP complex up to the GTP hydrolysis stage on the ribosome. The chain is Elongation factor Ts 2, mitochondrial from Thalassiosira pseudonana (Marine diatom).